The primary structure comprises 378 residues: Protein RecA (378 aa).

79–86 (GPESSGKT) is an ATP binding site.

This sequence belongs to the RecA family.

Its subcellular location is the cytoplasm. Functionally, can catalyze the hydrolysis of ATP in the presence of single-stranded DNA, the ATP-dependent uptake of single-stranded DNA by duplex DNA, and the ATP-dependent hybridization of homologous single-stranded DNAs. It interacts with LexA causing its activation and leading to its autocatalytic cleavage. The polypeptide is Protein RecA (Streptococcus equi subsp. zooepidemicus (strain H70)).